We begin with the raw amino-acid sequence, 282 residues long: Hydrogenase expression/formation protein HoxQ (282 aa).

The protein belongs to the HupH/HyaF family.

The sequence is that of Hydrogenase expression/formation protein HoxQ (hoxQ) from Cupriavidus necator (strain ATCC 17699 / DSM 428 / KCTC 22496 / NCIMB 10442 / H16 / Stanier 337) (Ralstonia eutropha).